Reading from the N-terminus, the 238-residue chain is Ribonuclease PH (238 aa).

Residues Arg86 and 124–126 (GTR) contribute to the phosphate site.

Belongs to the RNase PH family. In terms of assembly, homohexameric ring arranged as a trimer of dimers.

The enzyme catalyses tRNA(n+1) + phosphate = tRNA(n) + a ribonucleoside 5'-diphosphate. Functionally, phosphorolytic 3'-5' exoribonuclease that plays an important role in tRNA 3'-end maturation. Removes nucleotide residues following the 3'-CCA terminus of tRNAs; can also add nucleotides to the ends of RNA molecules by using nucleoside diphosphates as substrates, but this may not be physiologically important. Probably plays a role in initiation of 16S rRNA degradation (leading to ribosome degradation) during starvation. The polypeptide is Ribonuclease PH (Geobacter metallireducens (strain ATCC 53774 / DSM 7210 / GS-15)).